The chain runs to 371 residues: Collectin-46 (371 aa).

The N-terminal stretch at 1–20 (MLLLPLSVLLLLTQPWRSLG) is a signal peptide. The interval 43–215 (PEGGLPGRDG…ERGAKGESGL (173 aa)) is disordered. Residues 46–216 (GLPGRDGQDG…RGAKGESGLA (171 aa)) form the Collagen-like domain. Positions 51 to 65 (DGQDGREGPQGEKGD) are enriched in basic and acidic residues. A glycan (N-linked (GlcNAc...) asparagine) is linked at Asn90. Residues 113–128 (PAGREGPSGKQGSMGP) show a composition bias toward low complexity. Gly residues predominate over residues 139-148 (GPKGGMGAPG). The span at 170-191 (APGSAGVAGPAGAIGPQGPSGA) shows a compositional bias: low complexity. The segment covering 198–210 (KGDRGDPGERGAK) has biased composition (basic and acidic residues). The short motif at 201 to 203 (RGD) is the Cell attachment site element. The region spanning 273–371 (QLCREAKGQL…SEPLLVICEF (99 aa)) is the C-type lectin domain. 2 cysteine pairs are disulfide-bonded: Cys275–Cys369 and Cys347–Cys361.

It belongs to the SFTPD family. As to quaternary structure, oligomeric complex of 4 set of homotrimers. In terms of processing, hydroxylated. Highly expressed in thymus and liver.

It is found in the secreted. The chain is Collectin-46 (CL46) from Bos taurus (Bovine).